The sequence spans 288 residues: Killer cell lectin-like receptor 2 (288 aa).

Residues 1–45 (MSEQEVTYTTLRFHKSSGLQNPVRPEETQRPRDVGHRECSVPWKF) are Cytoplasmic-facing. Residues 46–66 (IVIVLGILCFLLLLTVAVLVI) form a helical; Signal-anchor for type II membrane protein membrane-spanning segment. The Extracellular portion of the chain corresponds to 67–288 (HIFRDGQEKH…SALQRDEDES (222 aa)). N-linked (GlcNAc...) asparagine glycosylation is found at N94, N105, and N114. Residues 144–263 (QVEGYWFCCG…THGCICEKRL (120 aa)) enclose the C-type lectin domain. 4 disulfides stabilise this stretch: C151–C156, C169–C257, C173–C259, and C238–C251. A glycan (N-linked (GlcNAc...) asparagine) is linked at N177.

Homodimer; disulfide-linked.

The protein resides in the membrane. Its function is as follows. Receptor on natural killer (NK) cells for class I MHC. This Mus musculus (Mouse) protein is Killer cell lectin-like receptor 2 (Klra2).